The chain runs to 88 residues: Small ribosomal subunit protein uS15 (88 aa).

The protein belongs to the universal ribosomal protein uS15 family. As to quaternary structure, part of the 30S ribosomal subunit. Forms a bridge to the 50S subunit in the 70S ribosome, contacting the 23S rRNA.

Functionally, one of the primary rRNA binding proteins, it binds directly to 16S rRNA where it helps nucleate assembly of the platform of the 30S subunit by binding and bridging several RNA helices of the 16S rRNA. Its function is as follows. Forms an intersubunit bridge (bridge B4) with the 23S rRNA of the 50S subunit in the ribosome. This Geobacter sp. (strain M21) protein is Small ribosomal subunit protein uS15.